Reading from the N-terminus, the 139-residue chain is Inactive palmitoleoyl-protein carboxylesterase notum1b (139 aa).

The protein belongs to the pectinacetylesterase family. Notum subfamily.

Probable inactive palmitoleoyl-protein carboxylesterase. This chain is Inactive palmitoleoyl-protein carboxylesterase notum1b, found in Danio rerio (Zebrafish).